Consider the following 892-residue polypeptide: DNA mismatch repair protein MutS (892 aa).

The disordered stretch occupies residues 663 to 684 (TNTSLREAAPTTTLSTSDQGQM). 696 to 703 (GPNASGKS) serves as a coordination point for ATP.

It belongs to the DNA mismatch repair MutS family.

This protein is involved in the repair of mismatches in DNA. It is possible that it carries out the mismatch recognition step. This protein has a weak ATPase activity. This chain is DNA mismatch repair protein MutS, found in Nostoc punctiforme (strain ATCC 29133 / PCC 73102).